The chain runs to 487 residues: V-type proton ATPase subunit B3 (487 aa).

It belongs to the ATPase alpha/beta chains family. As to quaternary structure, V-ATPase is a heteromultimeric enzyme composed of a peripheral catalytic V1 complex (components A to H) attached to an integral membrane V0 proton pore complex (components: a, c, c'', d and e).

It is found in the vacuole membrane. In terms of biological role, non-catalytic subunit of the peripheral V1 complex of vacuolar ATPase. V-ATPase is responsible for acidifying a variety of intracellular compartments in eukaryotic cells. The chain is V-type proton ATPase subunit B3 (VHA-B3) from Arabidopsis thaliana (Mouse-ear cress).